A 433-amino-acid chain; its full sequence is Leucine-rich repeat extensin-like protein 7 (433 aa).

An N-terminal signal peptide occupies residues 1 to 21; the sequence is MRIYQPTLLIFTTVVLLSISA. Asn-71 is a glycosylation site (N-linked (GlcNAc...) asparagine). LRR repeat units lie at residues 98–122, 123–145, 146–170, 171–194, 196–217, 219–239, 241–265, 266–289, and 290–313; these read VKTV…LGLL, TDIA…GFSQ, LSLL…VIGL, PKLK…LFDK, LDAL…MGNS, VSVL…SFGK, GKTL…MGLL, QNVT…MGQM, and ENLE…LCSL. The N-linked (GlcNAc...) asparagine glycan is linked to Asn-267. Asn-340 is a glycosylation site (N-linked (GlcNAc...) asparagine). The disordered stretch occupies residues 380–433; sequence FSPPPSQISPSSQPLAPAPSPTSPPLSTPPPARPCPPVYSPPPPPPLSLAPSMN. Residues 381 to 433 are contains the Ser-Pro(4) repeats; that stretch reads SPPPSQISPSSQPLAPAPSPTSPPLSTPPPARPCPPVYSPPPPPPLSLAPSMN. Positions 395–427 are enriched in pro residues; that stretch reads APAPSPTSPPLSTPPPARPCPPVYSPPPPPPLS.

Post-translationally, hydroxylated on proline residues in the S-P-P-P-P repeat. O-glycosylated on hydroxyprolines. Expressed in flowers and pollen.

It localises to the secreted. The protein localises to the cell wall. Modulates cell morphogenesis by regulating cell wall formation and assembly, and/or growth polarization. This is Leucine-rich repeat extensin-like protein 7 (LRX7) from Arabidopsis thaliana (Mouse-ear cress).